We begin with the raw amino-acid sequence, 33 residues long: Photosystem II reaction center protein Psb30 (33 aa).

A helical membrane pass occupies residues 5–25 (ILAQLTALAFIVVSGPLVIAL).

This sequence belongs to the Psb30/Ycf12 family. In terms of assembly, PSII is composed of 1 copy each of membrane proteins PsbA, PsbB, PsbC, PsbD, PsbE, PsbF, PsbH, PsbI, PsbJ, PsbK, PsbL, PsbM, PsbT, PsbX, PsbY, PsbZ, Psb30/Ycf12, peripheral proteins of the oxygen-evolving complex and a large number of cofactors. It forms dimeric complexes.

It is found in the plastid. The protein localises to the chloroplast thylakoid membrane. A core subunit of photosystem II (PSII), probably helps stabilize the reaction center. The polypeptide is Photosystem II reaction center protein Psb30 (Chaetosphaeridium globosum (Charophycean green alga)).